Here is a 289-residue protein sequence, read N- to C-terminus: MSKAREIRTKIASIKNTQKITRAMELVAASKMRKAQDRMAMSRPYASKIRKVISHVAASHAEYPHPYLQQRENIKRVGYIIVTTDRGLCGGLNVNLFRTAIADMKKWQADNIGMDLCVIGRKGEAFFRRYGGNVLAVADHLGDAPEVQDIIGIVKVMLDQYDKQQIDAIYIATNEFVNTMVQKPLVRQLLPLKTDEEEVEGGYWDYIYEPDESKDLLEMLLVRYIESQVYQAVIENIACEQSARMVAMKNATENAGQLIDELRLIYNKARQAGITQEIAEIVAGAAAVE.

This sequence belongs to the ATPase gamma chain family. In terms of assembly, F-type ATPases have 2 components, CF(1) - the catalytic core - and CF(0) - the membrane proton channel. CF(1) has five subunits: alpha(3), beta(3), gamma(1), delta(1), epsilon(1). CF(0) has three main subunits: a, b and c.

It localises to the cell inner membrane. Its function is as follows. Produces ATP from ADP in the presence of a proton gradient across the membrane. The gamma chain is believed to be important in regulating ATPase activity and the flow of protons through the CF(0) complex. In Coxiella burnetii (strain CbuG_Q212) (Coxiella burnetii (strain Q212)), this protein is ATP synthase gamma chain.